Consider the following 529-residue polypeptide: Delayed-rectifier potassium channel regulatory subunit KCNS1 (529 aa).

Over 1-217 the chain is Cytoplasmic; that stretch reads MLMLLVRGTH…LTMENPGYSL (217 aa). Residues 218–239 form a helical membrane-spanning segment; the sequence is PSKLFSCVSIGVVLASIAAMCI. Residues 240-270 are Extracellular-facing; the sequence is HSLPEYQAREAAAAVATVAAGRSAEDVRDDP. The chain crosses the membrane as a helical span at residues 271–293; it reads VLRRLEYFCIAWFSFEVSSRLLL. The Cytoplasmic portion of the chain corresponds to 294–304; it reads APSTRNFFCHP. A helical membrane pass occupies residues 305-322; the sequence is LNLIDIVSVLPFYLTLLA. At 323 to 342 the chain is on the extracellular side; the sequence is SVALGGNNHGGTSGEELGHL. The chain crosses the membrane as a helical; Voltage-sensor span at residues 343–363; sequence GKVVQVFRLMRIFRVLKLARH. Over 364 to 378 the chain is Cytoplasmic; that stretch reads STGLRSLGATLKHSY. A helical transmembrane segment spans residues 379–400; it reads REVGILLLYLAVGVSVFSGVAY. The Extracellular portion of the chain corresponds to 401–413; sequence TAEKEEDVGFDTI. An intramembrane region (helical) is located at residues 414 to 425; the sequence is PACWWWGTVSMT. The short motif at 426–431 is the Selectivity filter element; the sequence is TVGYGD. An intramembrane segment occupies 426-433; it reads TVGYGDVV. The Extracellular portion of the chain corresponds to 434–440; sequence PVTLAGK. The chain crosses the membrane as a helical span at residues 441 to 469; it reads LAASGCILGGILVVALPITIIFNKFSHFY. Residues 470–529 lie on the Cytoplasmic side of the membrane; that stretch reads QRQKALEAAVRNSGHREFEDLLSSVDGVSDASLETSRETSQEGRSADLEAPSESPKPQIY. Residues 498 to 529 are disordered; it reads SDASLETSRETSQEGRSADLEAPSESPKPQIY. Residues 504–516 are compositionally biased toward basic and acidic residues; the sequence is TSRETSQEGRSAD.

Belongs to the potassium channel family. S (TC 1.A.1.2) subfamily. Kv9.1/KCNS1 sub-subfamily. In terms of assembly, heterotetramer with KCNB1. Heterotetramer with KCNB2. Does not form homomultimers.

The protein localises to the cell membrane. Potassium channel regulatory subunit that modulate the delayed rectifier voltage-gated potassium channel activity of KCNB1 and KCNB2 by altering their kinetics, expression levels, and shifting the half-inactivation potential to more polarized values. While it does not form functional channels on its own, it can form functional heterotetrameric channels with KCNB1 and KCNB2. Each regulatory subunit has unique regulatory properties that can lead to extensive inhibition, significant changes in kinetics, and/or substantial shifts in the voltage dependencies of the inactivation process. This Lemur catta (Ring-tailed lemur) protein is Delayed-rectifier potassium channel regulatory subunit KCNS1.